The sequence spans 151 residues: Proline-rich acidic protein 1 (151 aa).

The signal sequence occupies residues 1–20 (MRRLLLVTSLVVVLLWEAGA). The tract at residues 71-151 (LTTEEKPRGQ…EDQDHIYHPQ (81 aa)) is disordered.

Interacts with isoform 1 and isoform 3 of MAD1L1. Interacts with MTTP. In terms of tissue distribution, highly expressed in the intestinal epithelial cells (at protein level). Abundantly expressed in the epithelial cells of the liver, kidney and cervix. Significantly down-regulated in hepatocellular carcinoma and right colon adenocarcinoma compared with the respective adjacent normal tissues. Expressed in epididymis (at protein level).

It localises to the secreted. The protein localises to the endoplasmic reticulum. Functionally, lipid-binding protein which promotes lipid absorption by facilitating MTTP-mediated lipid transfer (mainly triglycerides and phospholipids) and MTTP-mediated apoB lipoprotein assembly and secretion. Protects the gastrointestinal epithelium from irradiation-induced apoptosis. May play an important role in maintaining normal growth homeostasis in epithelial cells. Involved in p53/TP53-dependent cell survival after DNA damage. May down-regulate the expression of MAD1L1 and exert a suppressive role in mitotic spindle assembly checkpoint in hepatocellular carcinomas. The protein is Proline-rich acidic protein 1 (PRAP1) of Homo sapiens (Human).